We begin with the raw amino-acid sequence, 470 residues long: ATP synthase subunit beta (470 aa).

151–158 (GGAGVGKT) lines the ATP pocket.

The protein belongs to the ATPase alpha/beta chains family. As to quaternary structure, F-type ATPases have 2 components, CF(1) - the catalytic core - and CF(0) - the membrane proton channel. CF(1) has five subunits: alpha(3), beta(3), gamma(1), delta(1), epsilon(1). CF(0) has three main subunits: a(1), b(2) and c(9-12). The alpha and beta chains form an alternating ring which encloses part of the gamma chain. CF(1) is attached to CF(0) by a central stalk formed by the gamma and epsilon chains, while a peripheral stalk is formed by the delta and b chains.

It is found in the cell membrane. The catalysed reaction is ATP + H2O + 4 H(+)(in) = ADP + phosphate + 5 H(+)(out). Functionally, produces ATP from ADP in the presence of a proton gradient across the membrane. The catalytic sites are hosted primarily by the beta subunits. In Mycoplasma mobile (strain ATCC 43663 / 163K / NCTC 11711) (Mesomycoplasma mobile), this protein is ATP synthase subunit beta.